The sequence spans 238 residues: Ribonuclease PH (238 aa).

Residues Arg-86 and 124–126 (GTR) each bind phosphate.

It belongs to the RNase PH family. Homohexameric ring arranged as a trimer of dimers.

It catalyses the reaction tRNA(n+1) + phosphate = tRNA(n) + a ribonucleoside 5'-diphosphate. Phosphorolytic 3'-5' exoribonuclease that plays an important role in tRNA 3'-end maturation. Removes nucleotide residues following the 3'-CCA terminus of tRNAs; can also add nucleotides to the ends of RNA molecules by using nucleoside diphosphates as substrates, but this may not be physiologically important. Probably plays a role in initiation of 16S rRNA degradation (leading to ribosome degradation) during starvation. This chain is Ribonuclease PH, found in Brucella melitensis biotype 2 (strain ATCC 23457).